The following is a 394-amino-acid chain: Elongation factor Tu 1 (394 aa).

Positions Lys-10 to Ala-204 constitute a tr-type G domain. Residues Gly-19–Thr-26 are G1. Position 19-26 (Gly-19–Thr-26) interacts with GTP. Thr-26 is a binding site for Mg(2+). The tract at residues Gly-60 to Asn-64 is G2. A G3 region spans residues Asp-81–Gly-84. GTP is bound by residues Asp-81–His-85 and Asn-136–Asp-139. Residues Asn-136–Asp-139 are G4. Residues Ser-174–Leu-176 are G5.

This sequence belongs to the TRAFAC class translation factor GTPase superfamily. Classic translation factor GTPase family. EF-Tu/EF-1A subfamily. As to quaternary structure, monomer.

It localises to the cytoplasm. It catalyses the reaction GTP + H2O = GDP + phosphate + H(+). Functionally, GTP hydrolase that promotes the GTP-dependent binding of aminoacyl-tRNA to the A-site of ribosomes during protein biosynthesis. The sequence is that of Elongation factor Tu 1 from Shewanella frigidimarina (strain NCIMB 400).